Here is a 142-residue protein sequence, read N- to C-terminus: Large ribosomal subunit protein uL13 (142 aa).

It belongs to the universal ribosomal protein uL13 family. Part of the 50S ribosomal subunit.

Its function is as follows. This protein is one of the early assembly proteins of the 50S ribosomal subunit, although it is not seen to bind rRNA by itself. It is important during the early stages of 50S assembly. The protein is Large ribosomal subunit protein uL13 of Actinobacillus succinogenes (strain ATCC 55618 / DSM 22257 / CCUG 43843 / 130Z).